The following is a 31-amino-acid chain: Cytochrome b6-f complex subunit 8 (31 aa).

The helical transmembrane segment at 5-25 (IVSLAWAALMVVFTFSLSLVV) threads the bilayer.

It belongs to the PetN family. The 4 large subunits of the cytochrome b6-f complex are cytochrome b6, subunit IV (17 kDa polypeptide, PetD), cytochrome f and the Rieske protein, while the 4 small subunits are PetG, PetL, PetM and PetN. The complex functions as a dimer.

It localises to the plastid. The protein resides in the chloroplast thylakoid membrane. Its function is as follows. Component of the cytochrome b6-f complex, which mediates electron transfer between photosystem II (PSII) and photosystem I (PSI), cyclic electron flow around PSI, and state transitions. This chain is Cytochrome b6-f complex subunit 8, found in Cicer arietinum (Chickpea).